The sequence spans 598 residues: Elongation factor 4 (598 aa).

In terms of domain architecture, tr-type G spans 2-184; it reads TKIRNFSIIA…AVVDRIPPPS (183 aa). Residues 14-19 and 131-134 contribute to the GTP site; these read DHGKST and NKID.

Belongs to the TRAFAC class translation factor GTPase superfamily. Classic translation factor GTPase family. LepA subfamily.

The protein resides in the cell inner membrane. It catalyses the reaction GTP + H2O = GDP + phosphate + H(+). Required for accurate and efficient protein synthesis under certain stress conditions. May act as a fidelity factor of the translation reaction, by catalyzing a one-codon backward translocation of tRNAs on improperly translocated ribosomes. Back-translocation proceeds from a post-translocation (POST) complex to a pre-translocation (PRE) complex, thus giving elongation factor G a second chance to translocate the tRNAs correctly. Binds to ribosomes in a GTP-dependent manner. The chain is Elongation factor 4 from Syntrophobacter fumaroxidans (strain DSM 10017 / MPOB).